A 281-amino-acid polypeptide reads, in one-letter code: Ethylene-inducing xylanase 1 (281 aa).

An N-terminal signal peptide occupies residues 1–19; it reads MVSYKAFLITLAAVTRVLT. N-linked (GlcNAc...) asparagine glycosylation occurs at Asn-23. A GH11 domain is found at 32–220; that stretch reads SGTPSSTGTS…SSGSSDITVG (189 aa). Glu-116 (nucleophile) is an active-site residue. Glu-207 functions as the Proton donor in the catalytic mechanism. In terms of domain architecture, CBM1 spans 246–281; that stretch reads TCGALYSQCGGTGFTGSQCCASGTCKYANSYYSQCL.

This sequence belongs to the glycosyl hydrolase 11 (cellulase G) family.

It catalyses the reaction Endohydrolysis of (1-&gt;4)-beta-D-xylosidic linkages in xylans.. It participates in glycan degradation; xylan degradation. In terms of biological role, endo-1,4-beta-xylanase involved in the hydrolysis of xylan, a major structural heterogeneous polysaccharide found in plant biomass representing the second most abundant polysaccharide in the biosphere, after cellulose. May act as an elicitor of plant defense responses in certain plants but does not exhibit any cell death when transiently expressed in N.benthamiana. The sequence is that of Ethylene-inducing xylanase 1 from Botryotinia fuckeliana (strain B05.10) (Noble rot fungus).